We begin with the raw amino-acid sequence, 518 residues long: Forkhead box protein H1 (518 aa).

The interval Gly72–His113 is disordered. Over residues Ser104–His113 the composition is skewed to basic residues. A DNA-binding region (fork-head) is located at residues Lys117–Arg213. A disordered region spans residues Lys318 to Lys397. Over residues Ser329–Ser346 the composition is skewed to low complexity. Residues Thr380–Ser506 form an SMAD-interaction domain (SID) region. The short motif at Leu405–Tyr409 is the Fast/FoxH1 motif 1 (FM1) element. The Fast/FoxH1 motif 2 (FM2) signature appears at Pro415–Pro421. Residues Leu470 to Pro491 carry the SMAD interaction motif (SIM) motif.

In terms of assembly, ARF1 contains 2 smad2s, 1 smad4 and 1 foxh1/fast-1 protein. Interaction with smad4 is most likely indirect through interaction with the MH2 domain of smad2. Binds to the MH2 domain of smad3, which can incorporate into the ARF1 complex. The ARF1 and ARF2 complexes are activated by distinct TGF-beta family members; formation of ARF1 is promoted by activin. Interacts (via Fork-head domain) with gtf2ird1/wbscr11 (via repeats 4-5). In terms of tissue distribution, highly expressed in the animal cap (prospective ectoderm) and prospective mesoderm of stage 10.25 embryos.

The protein localises to the nucleus. Functionally, transcriptional activator. Recognizes and binds to the DNA sequence 5'-TGT[GT][GT]ATT-3'. Upon TGF-beta induction, forms a transcriptionally active complex with smad2 and smad4 called activin-responsive factor 1 (ARF1), which binds a site on the mix-B/mix.2 promoter called the activin response element (ARE). Binds to activated smads and the ARE with much lower affinity than fast3. Necessary for the first steps in mesoderm specification, directly inducing mesodermal genes. Acts with fast3 to control the convergent extension movements of gastrulation. Binds to the proximal element (PE) of the gsc gene and cooperates with gtf2ird1/wbscr11 and SMAD proteins to regulate gsc transcription. This Xenopus laevis (African clawed frog) protein is Forkhead box protein H1 (foxh1).